Here is a 169-residue protein sequence, read N- to C-terminus: MAHRAASDAELIAWVDEQDRPLGSLPRAELRERGLIGRGTFILLFNSAGELCVQRRTLSKAVYPGYWDLAAGGMVQAGEPYADSAARELEEELGIRDAVLREHGRFFFDEPGNRLWCAVFSAVSDAPLRLQAEEISEARFIRPELALEEARSLPYCPDSLQALRLYLDA.

Residues 35-163 (LIGRGTFILL…PYCPDSLQAL (129 aa)) form the Nudix hydrolase domain. A Nudix box motif is present at residues 81 to 103 (YADSAARELEEELGIRDAVLREH). Mg(2+) contacts are provided by Glu-88 and Glu-92.

The protein belongs to the Nudix hydrolase family. Mg(2+) serves as cofactor.

This is an uncharacterized protein from Pseudomonas aeruginosa (strain ATCC 15692 / DSM 22644 / CIP 104116 / JCM 14847 / LMG 12228 / 1C / PRS 101 / PAO1).